A 1097-amino-acid polypeptide reads, in one-letter code: DNA-directed RNA polymerase subunit beta (1097 aa).

Residues 1070–1097 (LMQDVNPRRNTPSRPTYESLGTSEYEED) are disordered. Residues 1077-1091 (RRNTPSRPTYESLGT) show a composition bias toward polar residues.

The protein belongs to the RNA polymerase beta chain family. As to quaternary structure, in cyanobacteria the RNAP catalytic core is composed of 2 alpha, 1 beta, 1 beta', 1 gamma and 1 omega subunit. When a sigma factor is associated with the core the holoenzyme is formed, which can initiate transcription.

It catalyses the reaction RNA(n) + a ribonucleoside 5'-triphosphate = RNA(n+1) + diphosphate. DNA-dependent RNA polymerase catalyzes the transcription of DNA into RNA using the four ribonucleoside triphosphates as substrates. The polypeptide is DNA-directed RNA polymerase subunit beta (Prochlorococcus marinus (strain MIT 9515)).